A 287-amino-acid polypeptide reads, in one-letter code: Acetylglutamate kinase (287 aa).

Residues 70–71, Arg92, and Asn184 contribute to the substrate site; that span reads GG.

It belongs to the acetylglutamate kinase family. ArgB subfamily.

The protein localises to the cytoplasm. It carries out the reaction N-acetyl-L-glutamate + ATP = N-acetyl-L-glutamyl 5-phosphate + ADP. It participates in amino-acid biosynthesis; L-arginine biosynthesis; N(2)-acetyl-L-ornithine from L-glutamate: step 2/4. In terms of biological role, catalyzes the ATP-dependent phosphorylation of N-acetyl-L-glutamate. This is Acetylglutamate kinase from Ruegeria pomeroyi (strain ATCC 700808 / DSM 15171 / DSS-3) (Silicibacter pomeroyi).